Consider the following 422-residue polypeptide: Synaptotagmin-2 (422 aa).

Residues 1–43 (MRNIFKRNQEPNVAPATTTATMPLAPVAPADNSTESTGPGESQ) are disordered. The Vesicular portion of the chain corresponds to 1–60 (MRNIFKRNQEPNVAPATTTATMPLAPVAPADNSTESTGPGESQEDMFAKLKEKFFNEINK). The span at 14 to 30 (APATTTATMPLAPVAPA) shows a compositional bias: low complexity. Residues 31 to 40 (DNSTESTGPG) show a composition bias toward polar residues. Residue Asn32 is glycosylated (N-linked (GlcNAc...) asparagine). Residues 61 to 87 (IPLPPWALIAMAVVAGLLLLTCCFCIC) form a helical membrane-spanning segment. Topologically, residues 88–422 (KKCCCKKKKN…EVDALLGKNK (335 aa)) are cytoplasmic. Residues 102-141 (GKGMKNAMNMKDMKGGQDDDDAETGLTEGEGEGEEEKEPE) form a disordered region. Residues 119-139 (DDDDAETGLTEGEGEGEEEKE) are compositionally biased toward acidic residues. Phosphothreonine occurs at positions 125 and 128. The tract at residues 136–382 (EEKEPENLGK…AIGKIFVGSN (247 aa)) is phospholipid binding. 2 consecutive C2 domains span residues 142-261 (NLGK…EEWR) and 273-406 (KLGD…AQWH). Ca(2+) is bound by residues Leu172, Asp173, and Asp179. Residue Thr202 is modified to Phosphothreonine. Tyr230 bears the Phosphotyrosine mark. Ca(2+) contacts are provided by Asp231, Phe232, Asp233, Ser236, Lys237, Asp239, Asp304, Asp310, Asp364, and Asp366. Thr386 bears the Phosphothreonine mark.

The protein belongs to the synaptotagmin family. In terms of assembly, homotetramer. Heterodimer; heterodimerizes with SYT1 in presence of calcium. Interacts with SCAMP5. Interacts with STON2. Interacts with PRRT2. (Microbial infection) Interacts with C.botulinum neurotoxin type B (BoNT/B, botB). As to quaternary structure, (Microbial infection) Interacts with C.botulinum neurotoxin type G (BoNT/G, botG). The cofactor is Ca(2+). Phosphorylation at Thr-202 by WNK1, changes the calcium requirement for SYT2-binding to phospholipid membranes.

Its subcellular location is the cytoplasmic vesicle. The protein localises to the secretory vesicle. The protein resides in the synaptic vesicle membrane. It is found in the chromaffin granule membrane. It localises to the cytoplasm. Functionally, exhibits calcium-dependent phospholipid and inositol polyphosphate binding properties. May have a regulatory role in the membrane interactions during trafficking of synaptic vesicles at the active zone of the synapse. Plays a role in dendrite formation by melanocytes. Its function is as follows. (Microbial infection) Receptor for C.botulinum neurotoxin type B (BoNT/B, botB); interaction is improved in the presence of gangliosides. The toxin binds via the vesicular domain (residues 47-60). (Microbial infection) Receptor for C.botulinum neurotoxin type G (BoNT/G, botG); gangliosides are not required for (or only very slightly improve) binding to a membrane-anchored receptor fragment. The toxin binds via the vesicular domain (residues 47-55). The sequence is that of Synaptotagmin-2 from Mus musculus (Mouse).